The primary structure comprises 1140 residues: uncharacterized protein (1140 aa).

7 disordered regions span residues 1-49 (MGSS…TSPE), 97-243 (SSDI…STIS), 280-427 (TSSS…KSSV), 512-541 (ASSTLGSKVSSSNSRMATSKTSSTSSDLSK), 702-747 (FSTP…STAS), 916-1059 (CPEK…PIGR), and 1080-1103 (LSSSTEKVNRSTTKPTAAIHGTSS). A compositionally biased stretch (polar residues) spans 105 to 129 (VNDVESSTSGPSNSYSALSSTNAQL). Composition is skewed to low complexity over residues 130-154 (SSSTTETDSISSSAIQTSSPQTSSS), 172-214 (TTAS…TTSD), and 221-243 (SSSTSDVSSLLSSTSSPASSTIS). Positions 516–528 (LGSKVSSSNSRMA) are enriched in polar residues. 2 stretches are compositionally biased toward low complexity: residues 529 to 541 (TSKTSSTSSDLSK) and 703 to 718 (STPESSPTTSTLVTSE). Over residues 719-733 (APSTVSSMTTSAPFI) the composition is skewed to polar residues. Low complexity predominate over residues 734-747 (NNSTSARPSPSTAS). Residues 949–961 (SFKDMKTSQETKK) show a composition bias toward basic and acidic residues. Low complexity predominate over residues 977–997 (EKTSPTTKASPSTSPSESKAA). Composition is skewed to polar residues over residues 998-1023 (GNTSVATNASPSTSPSESQGTGSTSV), 1031-1055 (TKNSEGVSTTKAKNTSTVAKSSTES), and 1089-1103 (RSTTKPTAAIHGTSS).

This is an uncharacterized protein from Saccharomyces cerevisiae (strain ATCC 204508 / S288c) (Baker's yeast).